The chain runs to 144 residues: Transcription antitermination protein NusB (144 aa).

Belongs to the NusB family.

Functionally, involved in transcription antitermination. Required for transcription of ribosomal RNA (rRNA) genes. Binds specifically to the boxA antiterminator sequence of the ribosomal RNA (rrn) operons. This is Transcription antitermination protein NusB from Paraburkholderia xenovorans (strain LB400).